The chain runs to 147 residues: Ribonuclease 4 (147 aa).

An N-terminal signal peptide occupies residues 1–28 (MALQRTHSLLLLLLLTLLGLGLVQPSYG). Glutamine 29 carries the pyrrolidone carboxylic acid modification. The dUMP site is built by arginine 35, histidine 40, lysine 68, asparagine 71, and threonine 72. The active-site Proton acceptor is the histidine 40. Intrachain disulfides connect cysteine 53–cysteine 109, cysteine 67–cysteine 120, cysteine 85–cysteine 135, and cysteine 92–cysteine 99. The active-site Proton donor is the histidine 144. Residue phenylalanine 145 coordinates dUMP.

It belongs to the pancreatic ribonuclease family.

It localises to the secreted. In terms of biological role, cleaves preferentially after uridine bases. Has antimicrobial activity against uropathogenic E.coli (UPEC). Probably contributes to urinary tract sterility. The protein is Ribonuclease 4 (RNASE4) of Pan troglodytes (Chimpanzee).